A 698-amino-acid chain; its full sequence is Ion-translocating oxidoreductase complex subunit C (698 aa).

4Fe-4S ferredoxin-type domains are found at residues 366–397 (TEMGLSEPEQSCIRCGLCVDACPAGLLPQQLY) and 407–436 (KARNHNLFDCIECGACAYVCPSNIPLVQYY). The [4Fe-4S] cluster site is built by Cys377, Cys380, Cys383, Cys387, Cys416, Cys419, Cys422, and Cys426.

It belongs to the 4Fe4S bacterial-type ferredoxin family. RnfC subfamily. The complex is composed of six subunits: RnfA, RnfB, RnfC, RnfD, RnfE and RnfG. It depends on [4Fe-4S] cluster as a cofactor.

It is found in the cell inner membrane. Functionally, part of a membrane-bound complex that couples electron transfer with translocation of ions across the membrane. This Yersinia pseudotuberculosis serotype O:3 (strain YPIII) protein is Ion-translocating oxidoreductase complex subunit C.